We begin with the raw amino-acid sequence, 334 residues long: Procathepsin L (334 aa).

Residues 1–17 (MTPLLLLAVLCLGTALA) form the signal peptide. The propeptide at 18–113 (TPKFDQTFNA…RLFQEPLMLQ (96 aa)) is activation peptide. Glu122 lines the Zn(2+) pocket. Cystine bridges form between Cys135–Cys178 and Cys169–Cys211. Cys138 is a catalytic residue. Residues Glu163, Asp184, Glu199, Glu205, Asp227, Asp250, His253, Asp273, and Asp275 each contribute to the Zn(2+) site. An intrachain disulfide couples Cys269 to Cys322. The active site involves His276. A propeptide spanning residues 289-290 (DS) is cleaved from the precursor. Residue Asn300 is part of the active site.

The protein belongs to the peptidase C1 family. Dimer of a heavy and a light chain linked by disulfide bonds. Interacts with Long isoform of CD74/Ii chain; the interaction stabilizes the conformation of mature CTSL. During export along the endocytic pathway, pro-CTSL undergoes several proteolytic cleavages to generate the CTSL single-chain and two-chain mature forms, composed of a heavy chain linked to a light chain by disulfide bonds. Autocleavage; produces the single-chain CTSL after cleavage of the propeptide. The cleavage can be intermolecular. In terms of tissue distribution, both mature cathepsin L1 and procathepsin L are found in the upper epidermis. The lower epidermis predominantly contains procathepsin L. In seminiferous tubules expression is greater at stages VI-VII than at stages IX-XII.

Its subcellular location is the lysosome. It localises to the apical cell membrane. It is found in the cytoplasmic vesicle. The protein resides in the secretory vesicle. The protein localises to the chromaffin granule. Its subcellular location is the secreted. It localises to the extracellular space. The catalysed reaction is Specificity close to that of papain. As compared to cathepsin B, cathepsin L exhibits higher activity toward protein substrates, but has little activity on Z-Arg-Arg-NHMec, and no peptidyl-dipeptidase activity.. Inhibited by the propeptide produced by autocleavage. Long isoform of CD74/Ii chain stabilizes the conformation of mature CTSL by binding to its active site and serving as a chaperone to help maintain a pool of mature enzyme in endocytic compartments and extracellular space of APCs. IFNG enhances the conversion into the CTSL mature and active form. Inhibited by CST6. Inhibited by the glycopeptide antibiotic teicoplanin. Inhibited by amantadine. Functionally, thiol protease important for the overall degradation of proteins in lysosomes. Plays a critical for normal cellular functions such as general protein turnover, antigen processing and bone remodeling. Involved in the solubilization of cross-linked TG/thyroglobulin and in the subsequent release of thyroid hormone thyroxine (T4) by limited proteolysis of TG/thyroglobulin in the thyroid follicle lumen. In neuroendocrine chromaffin cells secretory vesicles, catalyzes the prohormone proenkephalin processing to the active enkephalin peptide neurotransmitter. In thymus, regulates CD4(+) T cell positive selection by generating the major histocompatibility complex class II (MHCII) bound peptide ligands presented by cortical thymic epithelial cells. Also mediates invariant chain processing in cortical thymic epithelial cells. Major elastin-degrading enzyme at neutral pH. Accumulates as a mature and active enzyme in the extracellular space of antigen presenting cells (APCs) to regulate degradation of the extracellular matrix in the course of inflammation. Secreted form generates endostatin from COL18A1. Critical for cardiac morphology and function. Plays an important role in hair follicle morphogenesis and cycling, as well as epidermal differentiation. Required for maximal stimulation of steroidogenesis by TIMP1. This chain is Procathepsin L, found in Rattus norvegicus (Rat).